We begin with the raw amino-acid sequence, 760 residues long: Catecholate siderophore receptor Fiu (760 aa).

An N-terminal signal peptide occupies residues 1 to 31 (MENNRNFPARQFHSLTFFAGLCIGITPVAQA). Residues 67–175 (PVADTTRTMT…PTGSINMISK (109 aa)) form the TBDR plug domain. In terms of domain architecture, TBDR beta-barrel spans 180-760 (DSGIDASASI…TFLLTANMHF (581 aa)). The short motif at 743 to 760 (RYHPGEPRTFLLTANMHF) is the TonB C-terminal box element.

This sequence belongs to the TonB-dependent receptor family.

The protein resides in the cell outer membrane. In terms of biological role, involved in the active transport across the outer membrane of iron complexed with catecholate siderophores such as dihydroxybenzoylserine and dihydroxybenzoate. It derives its energy for transport by interacting with the trans-periplasmic membrane protein TonB. Can also transport catechol-substituted cephalosporins. Receptor for microcins M, H47 and E492. The chain is Catecholate siderophore receptor Fiu (fiu) from Escherichia coli O157:H7.